The primary structure comprises 102 residues: Large ribosomal subunit protein uL24 (102 aa).

The protein belongs to the universal ribosomal protein uL24 family. Part of the 50S ribosomal subunit.

Its function is as follows. One of two assembly initiator proteins, it binds directly to the 5'-end of the 23S rRNA, where it nucleates assembly of the 50S subunit. Functionally, one of the proteins that surrounds the polypeptide exit tunnel on the outside of the subunit. In Rhizobium rhizogenes (strain K84 / ATCC BAA-868) (Agrobacterium radiobacter), this protein is Large ribosomal subunit protein uL24.